Consider the following 689-residue polypeptide: Armadillo-like helical domain-containing protein 3 (689 aa).

Residues 520–538 (IFTLTLMVVNLFNMFITYG) traverse the membrane as a helical segment.

This sequence belongs to the ARMH3 family.

It localises to the golgi apparatus membrane. The protein resides in the cytoplasm. In terms of biological role, may be involved in Golgi maintenance and protein secretion. This is Armadillo-like helical domain-containing protein 3 from Xenopus laevis (African clawed frog).